Here is a 30-residue protein sequence, read N- to C-terminus: Cycloviolacin-O18 (30 aa).

Residues 1 to 30 constitute a cross-link (cyclopeptide (Gly-Asn)); it reads GIPCGESCVYIPCTVTALAGCKCKSKVCYN. 3 cysteine pairs are disulfide-bonded: Cys-4–Cys-21, Cys-8–Cys-23, and Cys-13–Cys-28.

Post-translationally, this is a cyclic peptide. Expressed in leaves, petals and petioles but not in roots and runners (at protein level).

In terms of biological role, probably participates in a plant defense mechanism. In Viola odorata (Sweet violet), this protein is Cycloviolacin-O18.